Reading from the N-terminus, the 125-residue chain is Actin, alpha skeletal muscle (125 aa).

The protein belongs to the actin family. As to quaternary structure, polymerization of globular actin (G-actin) leads to a structural filament (F-actin) in the form of a two-stranded helix. Each actin can bind to 4 others. Post-translationally, methylated at His-75 by SETD3.

The protein localises to the cytoplasm. It localises to the cytoskeleton. Its function is as follows. Actins are highly conserved proteins that are involved in various types of cell motility and are ubiquitously expressed in all eukaryotic cells. In Pleurodeles waltl (Iberian ribbed newt), this protein is Actin, alpha skeletal muscle.